Consider the following 236-residue polypeptide: C-&gt;U-editing enzyme APOBEC-1 (236 aa).

Positions 10–134 (KDYTLRRRIE…RRNRQGLKDL (125 aa)) constitute a CMP/dCMP-type deaminase domain. H61 contributes to the Zn(2+) binding site. E63 serves as the catalytic Proton donor. 2 residues coordinate Zn(2+): C93 and C96.

The protein belongs to the cytidine and deoxycytidylate deaminase family. In terms of assembly, homodimer. Interacts with A1CF; form an mRNA editing complex. Interacts with RBM47; form an mRNA editing complex. Found in a complex with CELF2/CUGBP2 and A1CF. Interacts with HNRPAB. Interacts with SYNCRIP. Zn(2+) is required as a cofactor. In terms of tissue distribution, expressed exclusively in the intestine.

The protein resides in the cytoplasm. Its subcellular location is the nucleus. It catalyses the reaction a cytidine in mRNA + H2O + H(+) = a uridine in mRNA + NH4(+). It carries out the reaction cytidine(6666) in apoB mRNA + H2O + H(+) = uridine(6666) in apoB mRNA + NH4(+). Cytidine deaminase catalyzing the cytidine to uridine postranscriptional editing of a variety of mRNAs. Form complexes with cofactors that confer differential editing activity and selectivity. Responsible for the postranscriptional editing of a CAA codon for Gln to a UAA codon for stop in the apolipoprotein B mRNA. Also involved in CGA (Arg) to UGA (Stop) editing in the NF1 mRNA. May also play a role in the epigenetic regulation of gene expression by participating in DNA demethylation. The protein is C-&gt;U-editing enzyme APOBEC-1 of Oryctolagus cuniculus (Rabbit).